The chain runs to 119 residues: Phosphoribosyl-AMP cyclohydrolase (119 aa).

Residue D71 participates in Mg(2+) binding. C72 contacts Zn(2+). The Mg(2+) site is built by D73 and D75. Residues C90 and C97 each coordinate Zn(2+).

Belongs to the PRA-CH family. In terms of assembly, homodimer. It depends on Mg(2+) as a cofactor. The cofactor is Zn(2+).

Its subcellular location is the cytoplasm. The catalysed reaction is 1-(5-phospho-beta-D-ribosyl)-5'-AMP + H2O = 1-(5-phospho-beta-D-ribosyl)-5-[(5-phospho-beta-D-ribosylamino)methylideneamino]imidazole-4-carboxamide. Its pathway is amino-acid biosynthesis; L-histidine biosynthesis; L-histidine from 5-phospho-alpha-D-ribose 1-diphosphate: step 3/9. Its function is as follows. Catalyzes the hydrolysis of the adenine ring of phosphoribosyl-AMP. This is Phosphoribosyl-AMP cyclohydrolase from Brucella abortus (strain 2308).